We begin with the raw amino-acid sequence, 378 residues long: Deoxyguanosinetriphosphate triphosphohydrolase-like protein (378 aa).

Positions 1 to 28 are disordered; sequence MLAPYACQPGESRGRQQPESMSTFRSPF. Over residues 15–26 the composition is skewed to polar residues; sequence RQQPESMSTFRS. One can recognise an HD domain in the interval 62–198; that stretch reads RLTHSIEVAQ…AAIADDVAYS (137 aa).

This sequence belongs to the dGTPase family. Type 2 subfamily.

The protein is Deoxyguanosinetriphosphate triphosphohydrolase-like protein of Cereibacter sphaeroides (strain ATCC 17025 / ATH 2.4.3) (Rhodobacter sphaeroides).